The sequence spans 194 residues: PBAN-type neuropeptides (194 aa).

The signal sequence occupies residues 1-23 (MFNQTQLFVFLAVFTTSSVLGNN). A Leucine amide modification is found at L47. The propeptide occupies 51–94 (SLRISTEDNRQAFFKLLEAADALKYYYDQLPYEMQADEPETRVT). A leucine amide mark is found at L103, L123, L159, and L169. A propeptide spanning residues 172–194 (ELSYDMMPNKIRVVRSTNKTRST) is cleaved from the precursor.

The protein belongs to the pyrokinin family. As to expression, expressed in the subesophageal ganglions. Not found in corpora cardiaca, corpora allata and thoracic ganglia.

The protein resides in the secreted. Its function is as follows. A hormone that controls sex pheromone production in females and pheromone responsiveness in male. Also mediates visceral muscle contractile activity (myotropic activity). This is PBAN-type neuropeptides from Helicoverpa zea (Corn earworm moth).